Consider the following 393-residue polypeptide: Protein shisa-9B (393 aa).

The signal sequence occupies residues 1-20; it reads MKSTGLLLGYFLMKVLVCDA. The Extracellular segment spans residues 21–131; it reads EGEPGKSLDG…MDQHDPTKDK (111 aa). Residues 28-52 form a disordered region; that stretch reads LDGAVTASGSNDSRDGENGLSETPH. A glycan (N-linked (GlcNAc...) asparagine) is linked at asparagine 38. The helical transmembrane segment at 132 to 152 threads the bilayer; it reads TNLIVYIICGVVAIMALVGIF. Residues 153-393 are Cytoplasmic-facing; the sequence is TKLGLEKAHR…VTNSKTEVTV (241 aa). The disordered stretch occupies residues 307 to 340; that stretch reads QKQNGHKSKSTKVHSSHPLAYGSNTIANPGRMSS. Residues 310–321 show a composition bias toward basic residues; it reads NGHKSKSTKVHS.

This sequence belongs to the shisa family. SHISA9 subfamily. Component of some AMPA receptors (ionotropic glutamate receptors) complex.

The protein localises to the cell projection. It is found in the dendritic spine membrane. The protein resides in the synapse. Regulator of short-term neuronal synaptic plasticity in the dentate gyrus. Associates with AMPA receptors (ionotropic glutamate receptors) in synaptic spines and promotes AMPA receptor desensitization at excitatory synapses. This chain is Protein shisa-9B (shisa9b), found in Danio rerio (Zebrafish).